Here is a 527-residue protein sequence, read N- to C-terminus: Glucose transporter 1B/1C/1D/1F/2B (527 aa).

The tract at residues 1-22 is disordered; that stretch reads MTERRDNVSHAPDAIEGPNDGA. The Cytoplasmic portion of the chain corresponds to 1–43; the sequence is MTERRDNVSHAPDAIEGPNDGAHAEDTSPGFFSLENLGVAQVQ. The chain crosses the membrane as a helical span at residues 44–64; it reads VVGGTLNGYVIGYVAVYLLLY. Over 65–118 the chain is Extracellular; sequence LTATECKFTTEGACGGRKIYGCKWSGTTCKFENPKCSEGSDPSDSCKNEVAYTS. Residues 119-139 traverse the membrane as a helical segment; that stretch reads VYSGIFACAMIVGSMVGSIIA. Residues 140-151 lie on the Cytoplasmic side of the membrane; that stretch reads GKCITTFGLKKS. The chain crosses the membrane as a helical span at residues 152–172; sequence FIIVSITCTIACVVVQVAIEY. Topologically, residues 173–175 are extracellular; that stretch reads NNY. Residues 176 to 196 traverse the membrane as a helical segment; it reads YALCTGRVLIGLGVGILCSVF. Over 197–213 the chain is Cytoplasmic; it reads PMYVNENAHPKLCKMDG. A helical transmembrane segment spans residues 214–234; it reads VLFQVFTTLGIMLAAMLGLIL. Topologically, residues 235–249 are extracellular; sequence DKTGASKEEANMAGR. The helical transmembrane segment at 250 to 270 threads the bilayer; the sequence is LHVFSAVPLGLSVAMFLVGMF. The Cytoplasmic portion of the chain corresponds to 271–299; sequence LRESTATFAQDDDGKADGGMDPNEYGWGQ. The chain crosses the membrane as a helical span at residues 300 to 320; the sequence is MLWPLFMGAVTAGTLQLTGIN. The Extracellular portion of the chain corresponds to 321–338; sequence AVMNYAPKITENLGMDPS. The helical transmembrane segment at 339–359 threads the bilayer; it reads LGNFLVMAWNFVTSLVAIPLA. At 360–372 the chain is on the cytoplasmic side; it reads SRFTMRQMFITCS. The helical transmembrane segment at 373 to 393 threads the bilayer; the sequence is FVASCMCLFLCGIPVFPGVAG. At 394 to 403 the chain is on the extracellular side; that stretch reads KEVKNGVATT. A helical transmembrane segment spans residues 404–424; that stretch reads GIALFIAAFEFGVGSCFFVLA. Over 425–436 the chain is Cytoplasmic; it reads QDLFPPSFRPKG. The helical transmembrane segment at 437–457 threads the bilayer; that stretch reads GSFVVMMQFIFNILINLLYPI. The Extracellular segment spans residues 458–475; sequence TTEAISGGATGNQDKGQA. Residues 476 to 496 traverse the membrane as a helical segment; sequence VAFILFGLIGLICSVLQFFYL. At 497–527 the chain is on the cytoplasmic side; that stretch reads YPYDANQDHENDHGGEPVEQKTYPVEASPRN. Residues 506–515 show a composition bias toward basic and acidic residues; sequence ENDHGGEPVE. The interval 506 to 527 is disordered; sequence ENDHGGEPVEQKTYPVEASPRN.

Belongs to the major facilitator superfamily. Sugar transporter (TC 2.A.1.1) family.

Its subcellular location is the membrane. Its function is as follows. Facilitative glucose transporter. This Trypanosoma brucei brucei protein is Glucose transporter 1B/1C/1D/1F/2B (THT1B).